Consider the following 969-residue polypeptide: MSFALGQRWISDTESDLGLGTVVAVDDRTVSVLFAASEENRLYAKHDAPITRVTFNKGDTIESHEGWSLEVEDVIEDGGLLTYIGTRTDTDEVNVVLRETLLSHQIRFNKPQDKLFAGQIDRMDRFALRFRALQNQYEQHKNPMRGLCGMRAGLIPHQLFIAHEVGRRYAPRVLLADEVGLGKTIEAGMIIHQQVLSGRAERVLIVVPETLQHQWLVEMMRRFNLHFSIFDEERCIESYADSENPFDTAQLVLCSLDFIRRSKRRFEQVVEADWDLLVVDEAHHLEWNQTKPSRAYQVIEAIAEETAGVLLLTATPEQLGHESHFARLRLLDPDRFYDYDAFVEEERQYQPVADAVTALMSGDKLSNDAKNRIAELLSEQDVEPLFRIIESDGSEEQQSQVRQELVDNLMDRHGTGRVLFRNTRAAIKGFPQRNLNLMPMALPPQYATSMRVATMMGGRMSNEARAMKMLYPEEIFQEFEGDSATWWQFDPRVNWLLELLKENRNEKVLIIASRASTALQLEQALREREGIRGTVFHEGMSIIERDKAAAYFAQEEGGAQVLICSEIGSEGRNFQFANQLVMFDLPFNPDLLEQRIGRLDRIGQKRDIDIHVPYLQGTSQELLARWFDEGLNAFGETCPTGRAVYEKFSDTIIAILATGKSDGLEPLIEESAALNKELKAQLEQGRDRLLEVHSNGGNKAKELAEKIAATDGDIHLVNFALNLFDTIGLNQDDKGENAIVVTPAENMLVSSYPGLPYEGCTITFDRKTALSREDMNLISWEHPMIQGGIDLVLTEGVGATAVSLLKNKALPAGTLLLELIYVVDAQAPKKSGIGRFLPKTPIRLMMDSKGNDLSAQVEFESFNRQLSPVNRHMASKLVNSVQKEIHALIDTAEVSIEDRIEAVRVDANAEMKTALNGELDRLQALKAVNPNIRDEELTQIETQMSELSAYIGKAQVQLDSLRLIVVSHN.

Residues 164 to 334 form the Helicase ATP-binding domain; it reads EVGRRYAPRV…FARLRLLDPD (171 aa). 177–184 is a binding site for ATP; the sequence is DEVGLGKT. A DEAH box motif is present at residues 280–283; sequence DEAH. One can recognise a Helicase C-terminal domain in the interval 492–672; it reads RVNWLLELLK…GLEPLIEESA (181 aa).

The protein belongs to the SNF2/RAD54 helicase family. RapA subfamily. Interacts with the RNAP. Has a higher affinity for the core RNAP than for the holoenzyme. Its ATPase activity is stimulated by binding to RNAP.

Its function is as follows. Transcription regulator that activates transcription by stimulating RNA polymerase (RNAP) recycling in case of stress conditions such as supercoiled DNA or high salt concentrations. Probably acts by releasing the RNAP, when it is trapped or immobilized on tightly supercoiled DNA. Does not activate transcription on linear DNA. Probably not involved in DNA repair. The sequence is that of RNA polymerase-associated protein RapA from Aliivibrio salmonicida (strain LFI1238) (Vibrio salmonicida (strain LFI1238)).